The primary structure comprises 353 residues: N-terminal EF-hand calcium-binding protein 3 (353 aa).

The region spanning 27-62 (AGHALFQDVFRRADKNDDGKLSFEEFQNYFADGVLS) is the EF-hand domain. 5 residues coordinate Ca(2+): Asp-40, Asn-42, Asp-44, Lys-46, and Glu-51. The interval 172-181 (IKAQSRPCGS) is required for interaction with APBA3. Residues 193 to 203 (SWSPSWSPGSS) are compositionally biased toward low complexity. The segment at 193–213 (SWSPSWSPGSSDTGRSSEAEQ) is disordered. Polar residues predominate over residues 204 to 213 (DTGRSSEAEQ). In terms of domain architecture, ABM spans 253-342 (LVAQRQVQVA…QAPDTLTTVF (90 aa)).

As to quaternary structure, interacts with the N-terminal domain of APBA2. Interacts with NEK2. Interacts with APBA3; APBA3 seems to mediate the interaction between NECAB3 and HIF1AN. Post-translationally, phosphorylated by NEK2. As to expression, widely expressed, with highest levels in the brain.

It is found in the golgi apparatus. In terms of biological role, inhibits the interaction of APBA2 with amyloid-beta precursor protein (APP), and hence allows formation of amyloid-beta. May enhance the activity of HIF1A and thus promote glycolysis under normoxic conditions; the function requires its ABM domain and may implicate the stabilization of the interaction between HIF1AN and APBA3. In Mus musculus (Mouse), this protein is N-terminal EF-hand calcium-binding protein 3 (Necab3).